Consider the following 82-residue polypeptide: Cytochrome b559 subunit alpha (82 aa).

The chain crosses the membrane as a helical span at residues 21 to 35 (VIHSITVPALFIAGW). Histidine 23 serves as a coordination point for heme.

The protein belongs to the PsbE/PsbF family. In terms of assembly, heterodimer of an alpha subunit and a beta subunit. PSII is composed of 1 copy each of membrane proteins PsbA, PsbB, PsbC, PsbD, PsbE, PsbF, PsbH, PsbI, PsbJ, PsbK, PsbL, PsbM, PsbT, PsbX, PsbY, PsbZ, Psb30/Ycf12, at least 3 peripheral proteins of the oxygen-evolving complex and a large number of cofactors. It forms dimeric complexes. It depends on heme b as a cofactor.

Its subcellular location is the plastid. It is found in the chloroplast thylakoid membrane. In terms of biological role, this b-type cytochrome is tightly associated with the reaction center of photosystem II (PSII). PSII is a light-driven water:plastoquinone oxidoreductase that uses light energy to abstract electrons from H(2)O, generating O(2) and a proton gradient subsequently used for ATP formation. It consists of a core antenna complex that captures photons, and an electron transfer chain that converts photonic excitation into a charge separation. This chain is Cytochrome b559 subunit alpha, found in Chlamydomonas reinhardtii (Chlamydomonas smithii).